The following is a 153-amino-acid chain: 3-hydroxyacyl-[acyl-carrier-protein] dehydratase FabZ (153 aa).

The active site involves His-54.

Belongs to the thioester dehydratase family. FabZ subfamily.

The protein resides in the cytoplasm. It carries out the reaction a (3R)-hydroxyacyl-[ACP] = a (2E)-enoyl-[ACP] + H2O. Its function is as follows. Involved in unsaturated fatty acids biosynthesis. Catalyzes the dehydration of short chain beta-hydroxyacyl-ACPs and long chain saturated and unsaturated beta-hydroxyacyl-ACPs. This Chlamydia muridarum (strain MoPn / Nigg) protein is 3-hydroxyacyl-[acyl-carrier-protein] dehydratase FabZ.